The chain runs to 139 residues: D-ribose pyranase (139 aa).

His20 acts as the Proton donor in catalysis. Substrate-binding positions include Asp28, His106, and 128–130; that span reads YAN.

Belongs to the RbsD / FucU family. RbsD subfamily. Homodecamer.

Its subcellular location is the cytoplasm. The catalysed reaction is beta-D-ribopyranose = beta-D-ribofuranose. It functions in the pathway carbohydrate metabolism; D-ribose degradation; D-ribose 5-phosphate from beta-D-ribopyranose: step 1/2. Its function is as follows. Catalyzes the interconversion of beta-pyran and beta-furan forms of D-ribose. The sequence is that of D-ribose pyranase from Aliivibrio salmonicida (strain LFI1238) (Vibrio salmonicida (strain LFI1238)).